The sequence spans 125 residues: Protein ApaG (125 aa).

One can recognise an ApaG domain in the interval 1-125 (MINSPRVCVQ…FRLAVPTLIH (125 aa)).

The polypeptide is Protein ApaG (Klebsiella pneumoniae (strain 342)).